The primary structure comprises 456 residues: Glycine--tRNA ligase (456 aa).

2 residues coordinate substrate: arginine 98 and glutamate 168. Residues 200-202 (RNE), 210-215 (FRTREF), 285-286 (EL), and 329-332 (GVER) contribute to the ATP site. 215 to 219 (FEQME) contributes to the substrate binding site. Position 325–329 (325–329 (EPSVG)) interacts with substrate.

This sequence belongs to the class-II aminoacyl-tRNA synthetase family. In terms of assembly, homodimer.

The protein resides in the cytoplasm. The enzyme catalyses tRNA(Gly) + glycine + ATP = glycyl-tRNA(Gly) + AMP + diphosphate. Catalyzes the attachment of glycine to tRNA(Gly). The protein is Glycine--tRNA ligase of Mycoplasma mycoides subsp. mycoides SC (strain CCUG 32753 / NCTC 10114 / PG1).